The following is a 297-amino-acid chain: 4-hydroxy-tetrahydrodipicolinate synthase (297 aa).

Threonine 47 is a binding site for pyruvate. The active-site Proton donor/acceptor is the tyrosine 135. Lysine 163 functions as the Schiff-base intermediate with substrate in the catalytic mechanism. A pyruvate-binding site is contributed by isoleucine 205.

It belongs to the DapA family. As to quaternary structure, homotetramer; dimer of dimers.

It is found in the cytoplasm. It carries out the reaction L-aspartate 4-semialdehyde + pyruvate = (2S,4S)-4-hydroxy-2,3,4,5-tetrahydrodipicolinate + H2O + H(+). Its pathway is amino-acid biosynthesis; L-lysine biosynthesis via DAP pathway; (S)-tetrahydrodipicolinate from L-aspartate: step 3/4. Catalyzes the condensation of (S)-aspartate-beta-semialdehyde [(S)-ASA] and pyruvate to 4-hydroxy-tetrahydrodipicolinate (HTPA). In Dehalococcoides mccartyi (strain ATCC BAA-2100 / JCM 16839 / KCTC 5957 / BAV1), this protein is 4-hydroxy-tetrahydrodipicolinate synthase.